A 550-amino-acid polypeptide reads, in one-letter code: Dihydroxy-acid dehydratase (550 aa).

Residue Asp-78 participates in Mg(2+) binding. Cys-119 serves as a coordination point for [2Fe-2S] cluster. Mg(2+)-binding residues include Asp-120 and Lys-121. Lys-121 bears the N6-carboxylysine mark. Cys-191 is a binding site for [2Fe-2S] cluster. A Mg(2+)-binding site is contributed by Glu-440. Ser-466 functions as the Proton acceptor in the catalytic mechanism.

It belongs to the IlvD/Edd family. In terms of assembly, homodimer. [2Fe-2S] cluster is required as a cofactor. The cofactor is Mg(2+).

The enzyme catalyses (2R)-2,3-dihydroxy-3-methylbutanoate = 3-methyl-2-oxobutanoate + H2O. It carries out the reaction (2R,3R)-2,3-dihydroxy-3-methylpentanoate = (S)-3-methyl-2-oxopentanoate + H2O. Its pathway is amino-acid biosynthesis; L-isoleucine biosynthesis; L-isoleucine from 2-oxobutanoate: step 3/4. It functions in the pathway amino-acid biosynthesis; L-valine biosynthesis; L-valine from pyruvate: step 3/4. Its function is as follows. Functions in the biosynthesis of branched-chain amino acids. Catalyzes the dehydration of (2R,3R)-2,3-dihydroxy-3-methylpentanoate (2,3-dihydroxy-3-methylvalerate) into 2-oxo-3-methylpentanoate (2-oxo-3-methylvalerate) and of (2R)-2,3-dihydroxy-3-methylbutanoate (2,3-dihydroxyisovalerate) into 2-oxo-3-methylbutanoate (2-oxoisovalerate), the penultimate precursor to L-isoleucine and L-valine, respectively. This is Dihydroxy-acid dehydratase from Methanococcus aeolicus (strain ATCC BAA-1280 / DSM 17508 / OCM 812 / Nankai-3).